Reading from the N-terminus, the 185-residue chain is HTH-type transcriptional repressor OpcR (185 aa).

Positions 49 to 73 (LSELSEATGMSKTRMSQVVREMIDA) form a DNA-binding region, H-T-H motif.

It belongs to the GbsR family.

Its activity is regulated as follows. Is not choline-responsive. Functionally, negatively regulates the transcription of the opuC operon. In the absence of GbsR, is also a negative regulator of the opuB operon. Binds to an inverted repeat in the promoter region of the operons. This is HTH-type transcriptional repressor OpcR (opcR) from Bacillus subtilis (strain 168).